A 514-amino-acid polypeptide reads, in one-letter code: 2,3-bisphosphoglycerate-independent phosphoglycerate mutase (514 aa).

Mn(2+)-binding residues include D14 and S64. The Phosphoserine intermediate role is filled by S64. Residues H125, 155–156 (RD), R187, R193, 263–266 (RADR), and K336 contribute to the substrate site. D403, H407, D444, H445, and H463 together coordinate Mn(2+).

The protein belongs to the BPG-independent phosphoglycerate mutase family. Monomer. Requires Mn(2+) as cofactor.

The enzyme catalyses (2R)-2-phosphoglycerate = (2R)-3-phosphoglycerate. It participates in carbohydrate degradation; glycolysis; pyruvate from D-glyceraldehyde 3-phosphate: step 3/5. In terms of biological role, catalyzes the interconversion of 2-phosphoglycerate and 3-phosphoglycerate. The chain is 2,3-bisphosphoglycerate-independent phosphoglycerate mutase from Salmonella paratyphi B (strain ATCC BAA-1250 / SPB7).